Consider the following 530-residue polypeptide: Ankyrin repeat domain-containing protein 53 (530 aa).

Residues 1–15 (MASAGSTARRAGSGS) are compositionally biased toward low complexity. The disordered stretch occupies residues 1 to 99 (MASAGSTARR…PSPSKESDQT (99 aa)). Positions 32-41 (PSGSMQQANK) are enriched in polar residues. ANK repeat units follow at residues 139–169 (KGFTAIHFAAQWGKLACLQVLVEEYKFPVDL), 173–206 (NSQTPLHLVIHRDNTTVALPCIYYLLEKGADLNA), and 210–239 (NGSTPLHLAARDGLLDCVKVLVQSGANVHA). Disordered stretches follow at residues 323–360 (GHSLVSNTKQARATALSKTPEQRESQRSRSFHPSVDAR) and 383–402 (PTMWNVSNNPARPPTTQISH). Polar residues-rich tracts occupy residues 326 to 341 (LVSNTKQARATALSKT) and 386 to 402 (WNVSNNPARPPTTQISH).

As to quaternary structure, interacts with PSRC1; recruited by PSRC1 to the spindle during mitosis. Post-translationally, phosphorylated during mitosis.

It localises to the cytoplasm. The protein localises to the cytoskeleton. The protein resides in the spindle. Its subcellular location is the spindle pole. In terms of biological role, required for normal progression through mitosis. Involved in chromosome alignment and cytokinesis via regulation of microtubules polymerization. The protein is Ankyrin repeat domain-containing protein 53 (ANKRD53) of Homo sapiens (Human).